The primary structure comprises 753 residues: MSADSIEPKQKRLRYADANKGRKVERKNTPRFEATTGLQSPGEEEQISADGGWVLIHPTPKTMLFKEILMGELGYTEGQGVYNAIRSTEAAIRQIQTTILTNTLNATRYEDLAKDWQTHLDSRGVSAEEIAATYGMYSEGEAVRVAEQIFATWHRTLQMSLLDFVRSITACFSASEPDGTASFAKYIDWIACLGLIPLQRLKRAPGATVHPKLWRKLPTDVPSLESCVDERDLAGKLYVANSLLREGLEAVVELARCTASVAIMDYDRVNIFYHYTRREVVAIDSTTGKRGECLVLWQPIWKDGSVLFDSPLQRICGEVCNCHALREHAKLCQLLNTVPVKILVGRKKDEAQGPGWASKAVDKLMGEGEELHSSSAASRLVKLIVNMKSMRHIGDITETVRSYLNETSTNLLSGAQVDTSLPGFGQSGKTKQGGNMPVQEAFRTSVINGINGMLEGYVNNLFKTIEDLRTGNSGLLDQLRDRESEITHLREQLLRVSQAAADGSTQPGASSAALPGSGAKSGAGGLGHEVIDIRNLMGDDGYVANSFQSRYIPAYTADMERLSRLWDQELLRCFKMNRITNNQGQEMSVSYSNSSISLLLAPYFFSILRARHLGFLITHQEAYRSEEELCVAVFKKTRLEAYLTELSTLFVARVRNSIAALNSTKRDLPVNDNEAQSDEEQLGKPSDERYYEGRDRSASPQRDRGRNGRGYHKRRRFSNNYRRRSGLARDSSIRDRSQRGSRPTPLLHDHVGH.

Positions 1–30 (MSADSIEPKQKRLRYADANKGRKVERKNTP) are enriched in basic and acidic residues. Residues 1 to 44 (MSADSIEPKQKRLRYADANKGRKVERKNTPRFEATTGLQSPGEE) are disordered. The tract at residues 454–475 (LEGYVNNLFKTIEDLRTGNSGL) is putative leucine zipper motif. Disordered stretches follow at residues 498–523 (QAAADGSTQPGASSAALPGSGAKSGA) and 668–753 (LPVN…HVGH). Residues 507-518 (PGASSAALPGSG) are compositionally biased toward low complexity. A compositionally biased stretch (basic and acidic residues) spans 681-706 (QLGKPSDERYYEGRDRSASPQRDRGR). Over residues 707-726 (NGRGYHKRRRFSNNYRRRSG) the composition is skewed to basic residues.

Belongs to the herpesviridae portal protein family. Homododecamerizes. Interacts with terminase subunits TRM1 and TRM3.

It localises to the virion. Its subcellular location is the host nucleus. Functionally, forms a portal in the viral capsid through which viral DNA is translocated during DNA packaging. Assembles as a dodecamer at a single fivefold axe of the T=16 icosahedric capsid. Binds to the molecular motor that translocates the viral DNA, termed terminase. This Equus caballus (Horse) protein is Portal protein.